The sequence spans 342 residues: MKNDYQIVTYNKTNYYVFRYVKTQESEKLFVIDEDDFDIIMSTGLSFYGIHSYIGHNITINDEQYTAYLHDYIVRDGDISSLVHHINHNTHDNRKVNLISVPKDEFELYQPKYHRTIELPKKCGINENQIPKFVHYVSKTKKHSDKFVFKMNIIGKDKPLIYQSSESKDISTFDKYVQIVEIILKLNNQYPEYFINKGIIENYSDNSLQLMKEYNEIISLTSYDCVKKNIMDIPKKFKLESLMSKASIKVQQYLETVDLTKKTGKNIKSNLPKGCGVTLDMIPKHCYYRPANEKTGDSFRIDRKHPLIVNGKELSTTSKKKVSTKDKFDELIKLLETLDNKH.

This is an uncharacterized protein from Acanthamoeba polyphaga (Amoeba).